Here is a 444-residue protein sequence, read N- to C-terminus: Orexin receptor type 2 (444 aa).

The segment covering 1-10 (MSGTKLEDSP) has biased composition (basic and acidic residues). The interval 1–30 (MSGTKLEDSPPCRNWSSAPELNETQEPFLN) is disordered. At 1–54 (MSGTKLEDSPPCRNWSSAPELNETQEPFLNPTDYDDEEFLRYLWREYLHPKEYE) the chain is on the extracellular side. N-linked (GlcNAc...) asparagine glycans are attached at residues Asn-14 and Asn-22. The segment covering 14 to 27 (NWSSAPELNETQEP) has biased composition (polar residues). The tract at residues 33–49 (DYDDEEFLRYLWREYLH) is required for response to orexin-A. The chain crosses the membrane as a helical span at residues 55–75 (WVLIAGYIIVFVVALIGNVLV). The Cytoplasmic portion of the chain corresponds to 76 to 88 (CVAVWKNHHMRTV). The helical transmembrane segment at 89–110 (TNYFIVNLSLADVLVTITCLPA) threads the bilayer. Over 111 to 127 (TLVVDITETWFFGQSLC) the chain is Extracellular. A disulfide bond links Cys-127 and Cys-210. A helical membrane pass occupies residues 128–150 (KVIPYLQTVSVSVSVLTLSCIAL). At 151–170 (DRWYAICHPLMFKSTAKRAR) the chain is on the cytoplasmic side. A helical membrane pass occupies residues 171–191 (NSIVIIWIVSCIIMIPQAIVM). The Extracellular segment spans residues 192 to 222 (ECSTMLPGLANKTTLFTVCDERWGGEIYPKM). Asn-202 is a glycosylation site (N-linked (GlcNAc...) asparagine). Residues 223 to 243 (YHICFFLVTYMAPLCLMVLAY) form a helical membrane-spanning segment. Residues 244 to 304 (LQIFRKLWCR…QIRARRKTAR (61 aa)) are Cytoplasmic-facing. The helical transmembrane segment at 305-326 (MLMVVLLVFAICYLPISILNVL) threads the bilayer. The Extracellular segment spans residues 327–342 (KRVFGMFTHTEDRETV). A helical membrane pass occupies residues 343 to 366 (YAWFTFSHWLVYANSAANPIIYNF). Over 367–444 (LSGKFREEFK…ANGAGQLQNW (78 aa)) the chain is Cytoplasmic.

This sequence belongs to the G-protein coupled receptor 1 family.

It is found in the cell membrane. Its function is as follows. Nonselective, high-affinity receptor for both orexin-A and orexin-B neuropeptides. Triggers an increase in cytoplasmic Ca(2+) levels in response to orexin-A binding. The sequence is that of Orexin receptor type 2 (HCRTR2) from Sus scrofa (Pig).